We begin with the raw amino-acid sequence, 406 residues long: Prenyltransferase phqJ (406 aa).

A compositionally biased stretch (polar residues) spans 1 to 19 (MTVSTESNFPHGASTQKPQ). Residues 1–23 (MTVSTESNFPHGASTQKPQSAEP) are disordered. E99 is a binding site for brevianamide F. Positions 113, 200, and 202 each coordinate dimethylallyl diphosphate. Y204 is a brevianamide F binding site. Residues K269, Y271, and Y340 each coordinate dimethylallyl diphosphate.

The protein belongs to the tryptophan dimethylallyltransferase family.

The protein operates within alkaloid biosynthesis. Prenyltransferase; part of the gene cluster that mediates the biosynthesis of paraherquamide, a fungal indole alkaloid that belongs to a family of natural products containing a characteristic bicyclo[2.2.2]diazaoctane core. The first steps in the biosynthesis of paraherquamide is the production of the beta-methyl-proline precursor from L-isoleucine. They require oxidation of a terminally hydroxylated L-isoleucine to the corresponding aldehyde by enzymes which have still to be identified. Spontaneous cyclization and dehydration would yield the 4-methyl pyrolline-5-carboxylic acid, which is then reduced by the pyrroline-5-carboxylate reductase phqD leading to the beta-methyl-proline precursor. The next step of paraherquamide biosynthesis involves coupling of beta-methyl-proline and L-tryptophan by the bimodular NRPS phqB, to produce a monooxopiperazine intermediate. The reductase (R) domain of phqB utilizes NADPH for hydride transfer to reduce the thioester bond of the T domain-tethered linear dipeptide to a hemithioaminal intermediate, which spontaneously cleaves the C-S bond to release the aldehyde product. This compound undergoes spontaneous cyclization and dehydration to give a dienamine which is reverse prenylated at C-2 by the reverse prenyltransferase phqJ. The other prenyltransferase present in the cluster, phqI may be a redundant gene in the pathway. During biosynthetic assembly, the key step to produce the polycyclic core is catalyzed by the bifunctional reductase and intramolecular [4+2] Diels-Alderase, phqE, resulting in formation of the [2.2.2] diazaoctane intermediate preparaherquamide. Following formation of preparaherquamide, an indole 2,3-epoxidation-initiated pinacol-like rearrangement is catalyzed by the phqK FAD-dependent monooxygenase. The prenyltransferase phqA, the cytochrome P450 monooxygenase phqL, and the FAD-linked oxidoreductase phqH (or the cytochrome P450 monooxygenase phqM), are proposed to be involved in the formation of the pyran ring. The FAD-dependent monooxygenase phqK is likely responsible for generation of the spiro-oxindole, and the N-methylation is likely mediated by the phqN methyltransferase leading to the isolable natural product paraherquamide F. However, the order of these biosynthetic steps has still to be determined. In late-stage paraherquamide biosynthesis, the third P450 monooxygenase, phqO, is probably responsible for the C-14 hydroxylation, transforming paraherquamide F to paraherquamide G, and paraherquamide E to the final product paraherquamide A. The expansion from the 6-membered ring pyran (in paraherquamides F and G) to the 7-membered dioxepin ring (in paraherquamides A and E) represents a poorly understood but intriguing process that probably involves the 2-oxoglutarate-dependent dioxygenase phqC. Finally, the remaining members of the paraherquamide cluster, including phqI as well as phqM (or phqH), do not have a clearly prescribed role and appear to be redundant. In Penicillium fellutanum, this protein is Prenyltransferase phqJ.